A 348-amino-acid chain; its full sequence is Glucan endo-1,3-beta-glucosidase, basic isoform (348 aa).

Gln-1 carries the post-translational modification Pyrrolidone carboxylic acid. Glu-95 functions as the Proton donor in the catalytic mechanism. Glu-240 serves as the catalytic Nucleophile. Residues 317–348 constitute a propeptide, removed in mature form; it reads AQRMQRLLLMSSMQHIPLRVTCKLEPSSQSLL.

Belongs to the glycosyl hydrolase 17 family.

The protein localises to the vacuole. The catalysed reaction is Hydrolysis of (1-&gt;3)-beta-D-glucosidic linkages in (1-&gt;3)-beta-D-glucans.. Functionally, implicated in the defense of plants against pathogens. The polypeptide is Glucan endo-1,3-beta-glucosidase, basic isoform (Phaseolus vulgaris (Kidney bean)).